A 206-amino-acid polypeptide reads, in one-letter code: MLILASASQSRKKLLENCQIEFIQISSNFDETSIKEKNIFNLALELSFQKANSLSKSIKKISLPEEINYGPLGILGCDSIFEFKGEAYGKPSDKAEAFIRWKKMSGEFGFLHTGHTLIIGNFDSTSNIFKITDTIKKTVSSRVYFSKLEDWEIKTYIDTNEPLYCAGGFALEGIGGKYIEKIEGCFSNVMGLSLPWLRKNLLKQKI.

The active-site Proton acceptor is Asp-78.

This sequence belongs to the Maf family. A divalent metal cation serves as cofactor.

It localises to the cytoplasm. It carries out the reaction a ribonucleoside 5'-triphosphate + H2O = a ribonucleoside 5'-phosphate + diphosphate + H(+). The catalysed reaction is a 2'-deoxyribonucleoside 5'-triphosphate + H2O = a 2'-deoxyribonucleoside 5'-phosphate + diphosphate + H(+). In terms of biological role, nucleoside triphosphate pyrophosphatase. May have a dual role in cell division arrest and in preventing the incorporation of modified nucleotides into cellular nucleic acids. The sequence is that of Nucleoside triphosphate pyrophosphatase from Prochlorococcus marinus (strain MIT 9312).